Here is a 346-residue protein sequence, read N- to C-terminus: Phosphoribosylformylglycinamidine cyclo-ligase (346 aa).

It belongs to the AIR synthase family.

Its subcellular location is the cytoplasm. It catalyses the reaction 2-formamido-N(1)-(5-O-phospho-beta-D-ribosyl)acetamidine + ATP = 5-amino-1-(5-phospho-beta-D-ribosyl)imidazole + ADP + phosphate + H(+). It functions in the pathway purine metabolism; IMP biosynthesis via de novo pathway; 5-amino-1-(5-phospho-D-ribosyl)imidazole from N(2)-formyl-N(1)-(5-phospho-D-ribosyl)glycinamide: step 2/2. The polypeptide is Phosphoribosylformylglycinamidine cyclo-ligase (Photobacterium profundum (strain SS9)).